The chain runs to 609 residues: Membrane protein insertase YidC (609 aa).

Helical transmembrane passes span 8-28 (LILATALSFLVILVWFILFPP), 381-401 (MGWSIIGLTLIIKAIVFPLAL), 451-471 (LPILLQIPIFFSLYKVIFVTI), 509-529 (SLTATILIGILPLLLGISMWL), and 545-565 (IFAWMPWVFMFMLGSFASGLV).

This sequence belongs to the OXA1/ALB3/YidC family. Type 1 subfamily. In terms of assembly, interacts with the Sec translocase complex via SecD. Specifically interacts with transmembrane segments of nascent integral membrane proteins during membrane integration.

It localises to the cell inner membrane. Required for the insertion and/or proper folding and/or complex formation of integral membrane proteins into the membrane. Involved in integration of membrane proteins that insert both dependently and independently of the Sec translocase complex, as well as at least some lipoproteins. Aids folding of multispanning membrane proteins. This Ruegeria pomeroyi (strain ATCC 700808 / DSM 15171 / DSS-3) (Silicibacter pomeroyi) protein is Membrane protein insertase YidC.